Here is a 353-residue protein sequence, read N- to C-terminus: Alanine racemase (353 aa).

Lysine 33 acts as the Proton acceptor; specific for D-alanine in catalysis. Lysine 33 bears the N6-(pyridoxal phosphate)lysine mark. Arginine 129 contributes to the substrate binding site. Tyrosine 250 acts as the Proton acceptor; specific for L-alanine in catalysis. Methionine 298 provides a ligand contact to substrate.

It belongs to the alanine racemase family. Pyridoxal 5'-phosphate is required as a cofactor.

It carries out the reaction L-alanine = D-alanine. It functions in the pathway amino-acid biosynthesis; D-alanine biosynthesis; D-alanine from L-alanine: step 1/1. Catalyzes the interconversion of L-alanine and D-alanine. May also act on other amino acids. The sequence is that of Alanine racemase (alr) from Azoarcus sp. (strain BH72).